The chain runs to 193 residues: dTTP/UTP pyrophosphatase (193 aa).

Catalysis depends on D77, which acts as the Proton acceptor.

It belongs to the Maf family. YhdE subfamily. The cofactor is a divalent metal cation.

The protein resides in the cytoplasm. The enzyme catalyses dTTP + H2O = dTMP + diphosphate + H(+). The catalysed reaction is UTP + H2O = UMP + diphosphate + H(+). Its function is as follows. Nucleoside triphosphate pyrophosphatase that hydrolyzes dTTP and UTP. May have a dual role in cell division arrest and in preventing the incorporation of modified nucleotides into cellular nucleic acids. In Bacteroides fragilis (strain YCH46), this protein is dTTP/UTP pyrophosphatase.